The following is a 540-amino-acid chain: Membrane protein insertase YidC (540 aa).

Helical transmembrane passes span 1 to 21 (MVVQ…MMLD), 351 to 371 (NWGI…FPLT), 418 to 438 (LGGC…YYML), 464 to 484 (ILPI…PSSI), and 497 to 517 (PLIF…YYII).

It belongs to the OXA1/ALB3/YidC family. Type 1 subfamily. As to quaternary structure, interacts with the Sec translocase complex via SecD. Specifically interacts with transmembrane segments of nascent integral membrane proteins during membrane integration.

The protein resides in the cell membrane. Its function is as follows. Required for the insertion and/or proper folding and/or complex formation of integral membrane proteins into the membrane. Involved in integration of membrane proteins that insert both dependently and independently of the Sec translocase complex, as well as at least some lipoproteins. Aids folding of multispanning membrane proteins. The protein is Membrane protein insertase YidC of Wigglesworthia glossinidia brevipalpis.